A 328-amino-acid chain; its full sequence is DNA polymerase IV (328 aa).

A UmuC domain is found at 6–187 (IIHIDMDYFF…LDIGDFPGVG (182 aa)). Mg(2+)-binding residues include Asp-10 and Asp-105. Glu-106 is an active-site residue.

Belongs to the DNA polymerase type-Y family. As to quaternary structure, monomer. The cofactor is Mg(2+).

The protein localises to the cytoplasm. It carries out the reaction DNA(n) + a 2'-deoxyribonucleoside 5'-triphosphate = DNA(n+1) + diphosphate. Functionally, poorly processive, error-prone DNA polymerase involved in untargeted mutagenesis. Copies undamaged DNA at stalled replication forks, which arise in vivo from mismatched or misaligned primer ends. These misaligned primers can be extended by PolIV. Exhibits no 3'-5' exonuclease (proofreading) activity. May be involved in translesional synthesis, in conjunction with the beta clamp from PolIII. The polypeptide is DNA polymerase IV (Staphylococcus aureus (strain bovine RF122 / ET3-1)).